An 86-amino-acid chain; its full sequence is Omega-theraphotoxin-Hhn1a 2 (86 aa).

The first 21 residues, 1-21 (MKSIVFVALLGLALLAVVCSA), serve as a signal peptide directing secretion. Residues 22–50 (SEDAHKELLKEVVRAMVVDKTDAVQAEER) constitute a propeptide that is removed on maturation. 3 disulfide bridges follow: C52-C66, C59-C71, and C65-C78.

Belongs to the neurotoxin 10 (Hwtx-1) family. 17 (Hntx-9) subfamily. As to expression, expressed by the venom gland.

It is found in the secreted. Ion channel inhibitor. The chain is Omega-theraphotoxin-Hhn1a 2 from Cyriopagopus hainanus (Chinese bird spider).